We begin with the raw amino-acid sequence, 27 residues long: uncharacterized protein (27 aa).

This is an uncharacterized protein from Archaeoglobus fulgidus (strain ATCC 49558 / DSM 4304 / JCM 9628 / NBRC 100126 / VC-16).